We begin with the raw amino-acid sequence, 132 residues long: Small ribosomal subunit protein uS8 (132 aa).

It belongs to the universal ribosomal protein uS8 family. Part of the 30S ribosomal subunit. Contacts proteins S5 and S12.

One of the primary rRNA binding proteins, it binds directly to 16S rRNA central domain where it helps coordinate assembly of the platform of the 30S subunit. The protein is Small ribosomal subunit protein uS8 of Lactobacillus delbrueckii subsp. bulgaricus (strain ATCC BAA-365 / Lb-18).